Consider the following 811-residue polypeptide: Zinc finger CCCH domain-containing protein 11A (811 aa).

C3H1-type zinc fingers lie at residues 2–30 (PNQG…HCEA), 32–58 (LGNE…HMEI), and 61–87 (KRSE…HHNR). Phosphoserine is present on Ser109. Residues Lys115 and Lys125 each participate in a glycyl lysine isopeptide (Lys-Gly) (interchain with G-Cter in SUMO2) cross-link. Phosphoserine is present on Ser133. 4 disordered regions span residues 140–195 (MKVE…GLRV), 224–258 (KKMK…KENV), 286–352 (GKRK…EKVN), and 368–434 (ERAS…TCIK). Lys141 is covalently cross-linked (Glycyl lysine isopeptide (Lys-Gly) (interchain with G-Cter in SUMO2)). Residues Ser150 and Ser172 each carry the phosphoserine modification. Acidic residues predominate over residues 161-176 (ADDDEDDDDQFSEEGD). Ser291 carries the phosphoserine modification. Basic and acidic residues-rich tracts occupy residues 310–323 (KKVE…DKTP) and 368–391 (ERAS…KTDD). Position 322 is a phosphothreonine (Thr322). A coiled-coil region spans residues 363-424 (EEILLERASQ…KHRQQEAERQ (62 aa)). Residue Ser371 is modified to Phosphoserine. Positions 392–403 (STSGARSSSTIR) are enriched in polar residues. Positions 418-434 (QQEAERQKSKKDTTCIK) are enriched in basic and acidic residues. Lys479 is covalently cross-linked (Glycyl lysine isopeptide (Lys-Gly) (interchain with G-Cter in SUMO2)). Residues 483-550 (ALRVQQSSES…KEASGETTGV (68 aa)) form a disordered region. A compositionally biased stretch (low complexity) spans 487 to 499 (QQSSESSTSSPSQ). Lys620 participates in a covalent cross-link: Glycyl lysine isopeptide (Lys-Gly) (interchain with G-Cter in SUMO2). Residues 716–769 (TVPEAENPRDSLVLPPTQSSSDSSPPEVSGPSSSQMSMKTRRLSSASTGKPQLS) form a disordered region. A compositionally biased stretch (low complexity) spans 730-749 (PPTQSSSDSSPPEVSGPSSS). Over residues 750–766 (QMSMKTRRLSSASTGKP) the composition is skewed to polar residues.

Interacts with TREX complex components THOC2, DDX39 and POLDIP3; the interactions are ATP-dependent. Interacts with PABPN1; this interaction retains ZC3H11A in nuclear speckles. Interacts with KPNA3.

It is found in the nucleus speckle. Through its association with TREX complex components, may participate in the export and post-transcriptional coordination of selected mRNA transcripts, including those required to maintain the metabolic processes in embryonic cells. Binds RNA. This is Zinc finger CCCH domain-containing protein 11A (ZC3H11A) from Pongo abelii (Sumatran orangutan).